The following is a 400-amino-acid chain: Enoyl-[acyl-carrier-protein] reductase [NADH] (400 aa).

Residues 48-53 (GASTGY), 74-75 (FE), 111-112 (DA), and 139-140 (LA) each bind NAD(+). Position 225 (Y225) interacts with substrate. Catalysis depends on Y235, which acts as the Proton donor. NAD(+)-binding positions include K244 and 273 to 275 (VVT).

The protein belongs to the TER reductase family. In terms of assembly, monomer.

It carries out the reaction a 2,3-saturated acyl-[ACP] + NAD(+) = a (2E)-enoyl-[ACP] + NADH + H(+). Its pathway is lipid metabolism; fatty acid biosynthesis. Involved in the final reduction of the elongation cycle of fatty acid synthesis (FAS II). Catalyzes the reduction of a carbon-carbon double bond in an enoyl moiety that is covalently linked to an acyl carrier protein (ACP). This chain is Enoyl-[acyl-carrier-protein] reductase [NADH], found in Burkholderia cenocepacia (strain HI2424).